We begin with the raw amino-acid sequence, 82 residues long: Sec-independent protein translocase protein TatA (82 aa).

A helical transmembrane segment spans residues 1–21 (MGIFDWKHWIVILIVVVLVFG). A disordered region spans residues 43-82 (VNTEEDDKKDQPAAQPAQPLNQPHTIDAQAQKVEEPARKD).

This sequence belongs to the TatA/E family. The Tat system comprises two distinct complexes: a TatABC complex, containing multiple copies of TatA, TatB and TatC subunits, and a separate TatA complex, containing only TatA subunits. Substrates initially bind to the TatABC complex, which probably triggers association of the separate TatA complex to form the active translocon.

It localises to the cell inner membrane. Its function is as follows. Part of the twin-arginine translocation (Tat) system that transports large folded proteins containing a characteristic twin-arginine motif in their signal peptide across membranes. TatA could form the protein-conducting channel of the Tat system. The chain is Sec-independent protein translocase protein TatA from Pseudomonas aeruginosa (strain LESB58).